The chain runs to 598 residues: Elongation factor 4 (598 aa).

The 178-residue stretch at 4 to 181 (KKIRNFAIIA…AIVNLIPPPQ (178 aa)) folds into the tr-type G domain. Residues 16-21 (DHGKST) and 128-131 (NKID) each bind GTP.

The protein belongs to the TRAFAC class translation factor GTPase superfamily. Classic translation factor GTPase family. LepA subfamily.

The protein resides in the cell membrane. The catalysed reaction is GTP + H2O = GDP + phosphate + H(+). In terms of biological role, required for accurate and efficient protein synthesis under certain stress conditions. May act as a fidelity factor of the translation reaction, by catalyzing a one-codon backward translocation of tRNAs on improperly translocated ribosomes. Back-translocation proceeds from a post-translocation (POST) complex to a pre-translocation (PRE) complex, thus giving elongation factor G a second chance to translocate the tRNAs correctly. Binds to ribosomes in a GTP-dependent manner. The protein is Elongation factor 4 of Mesomycoplasma hyopneumoniae (strain 232) (Mycoplasma hyopneumoniae).